We begin with the raw amino-acid sequence, 352 residues long: uncharacterized protein (352 aa).

This is an uncharacterized protein from Acanthamoeba polyphaga mimivirus (APMV).